A 327-amino-acid chain; its full sequence is Phenylalanine--tRNA ligase alpha subunit (327 aa).

Mg(2+) is bound at residue E252.

This sequence belongs to the class-II aminoacyl-tRNA synthetase family. Phe-tRNA synthetase alpha subunit type 1 subfamily. In terms of assembly, tetramer of two alpha and two beta subunits. Requires Mg(2+) as cofactor.

The protein resides in the cytoplasm. It catalyses the reaction tRNA(Phe) + L-phenylalanine + ATP = L-phenylalanyl-tRNA(Phe) + AMP + diphosphate + H(+). In Shigella sonnei (strain Ss046), this protein is Phenylalanine--tRNA ligase alpha subunit.